Reading from the N-terminus, the 236-residue chain is Adenosine 5'-phosphosulfate reductase (236 aa).

[4Fe-4S] cluster is bound by residues cysteine 123, cysteine 124, cysteine 206, and cysteine 209. The active-site Nucleophile; cysteine thiosulfonate intermediate is cysteine 232.

It belongs to the PAPS reductase family. CysH subfamily. [4Fe-4S] cluster serves as cofactor.

It localises to the cytoplasm. The catalysed reaction is [thioredoxin]-disulfide + sulfite + AMP + 2 H(+) = adenosine 5'-phosphosulfate + [thioredoxin]-dithiol. The protein operates within sulfur metabolism; hydrogen sulfide biosynthesis; sulfite from sulfate. Catalyzes the formation of sulfite from adenosine 5'-phosphosulfate (APS) using thioredoxin as an electron donor. This is Adenosine 5'-phosphosulfate reductase from Streptomyces coelicolor (strain ATCC BAA-471 / A3(2) / M145).